Consider the following 451-residue polypeptide: 3-carboxy-cis,cis-muconate cycloisomerase (451 aa).

This sequence belongs to the class-II fumarase/aspartase family.

The enzyme catalyses 2-(carboxymethyl)-5-oxo-2,5-dihydro-2-furoate = 3-carboxy-cis,cis-muconate + H(+). Its function is as follows. Catalyzes an anti cycloisomerization. This chain is 3-carboxy-cis,cis-muconate cycloisomerase (pcaB), found in Bradyrhizobium diazoefficiens (strain JCM 10833 / BCRC 13528 / IAM 13628 / NBRC 14792 / USDA 110).